The following is a 930-amino-acid chain: Polypeptide N-acetylgalactosaminyltransferase 5 (930 aa).

The Cytoplasmic portion of the chain corresponds to M1–G12. Residues R13–L35 form a helical; Signal-anchor for type II membrane protein membrane-spanning segment. Over S36–V930 the chain is Lumenal. Residues G163–R210 form a disordered region. N178 carries N-linked (GlcNAc...) asparagine glycosylation. The span at T180–A193 shows a compositional bias: basic and acidic residues. Residues Y197–R210 are compositionally biased toward polar residues. N-linked (GlcNAc...) asparagine glycosylation is found at N198 and N213. Phosphoserine is present on S285. N-linked (GlcNAc...) asparagine glycosylation is found at N287 and N309. Residues L344–L377 are disordered. Residues N387 and N403 are each glycosylated (N-linked (GlcNAc...) asparagine). Cystine bridges form between C476–C708, C699–C779, and C812–C825. The interval L485–R594 is catalytic subdomain A. Positions 526 and 555 each coordinate substrate. The N-linked (GlcNAc...) asparagine glycan is linked to N568. D578 contributes to the Mn(2+) binding site. Position 579 (S579) interacts with substrate. Position 580 (H580) interacts with Mn(2+). The tract at residues I654 to R716 is catalytic subdomain B. W685 is a binding site for substrate. A Mn(2+)-binding site is contributed by H713. Substrate is bound by residues R716 and Y721. N-linked (GlcNAc...) asparagine glycans are attached at residues N766, N817, and N835. A Ricin B-type lectin domain is found at K794–E925. Disulfide bonds link C848-C863 and C898-C913. N902 is a glycosylation site (N-linked (GlcNAc...) asparagine).

This sequence belongs to the glycosyltransferase 2 family. GalNAc-T subfamily. Interacts with EXT2. Does not interact with EXT1, EXTL1 or EXTL3. It depends on Mn(2+) as a cofactor. In terms of tissue distribution, predominantly expressed in sublingual gland. Expressed at lower level in stomach and small intestine. Weakly or not expressed in submandibular gland, parotid gland, kidney, liver, heart, brain, spleen, lung, skeletal muscle, testis, ovary, cervix and uterus.

It localises to the golgi apparatus membrane. It carries out the reaction L-seryl-[protein] + UDP-N-acetyl-alpha-D-galactosamine = a 3-O-[N-acetyl-alpha-D-galactosaminyl]-L-seryl-[protein] + UDP + H(+). The enzyme catalyses L-threonyl-[protein] + UDP-N-acetyl-alpha-D-galactosamine = a 3-O-[N-acetyl-alpha-D-galactosaminyl]-L-threonyl-[protein] + UDP + H(+). It functions in the pathway protein modification; protein glycosylation. Catalyzes the initial reaction in O-linked oligosaccharide biosynthesis, the transfer of an N-acetyl-D-galactosamine residue to a serine or threonine residue on the protein receptor. Has activity toward EA2 peptide substrate, but has a weak activity toward Muc2, Muc1b, rMuc-2 or mG-Muc substrates. The sequence is that of Polypeptide N-acetylgalactosaminyltransferase 5 (Galnt5) from Rattus norvegicus (Rat).